The primary structure comprises 225 residues: Putative elongation factor 1 gamma homolog (225 aa).

Residues 94–225 enclose the GST C-terminal domain; the sequence is DFKTRADILR…MCETEMQPIK (132 aa).

The sequence is that of Putative elongation factor 1 gamma homolog from Saccharomyces cerevisiae (strain ATCC 204508 / S288c) (Baker's yeast).